Reading from the N-terminus, the 130-residue chain is Glycine cleavage system H protein (130 aa).

In terms of domain architecture, Lipoyl-binding spans 24 to 106 (GIKVGISAFA…YQEGWLLKIT (83 aa)). Lys-65 is subject to N6-lipoyllysine.

The protein belongs to the GcvH family. The glycine cleavage system is composed of four proteins: P, T, L and H. (R)-lipoate is required as a cofactor.

The glycine cleavage system catalyzes the degradation of glycine. The H protein shuttles the methylamine group of glycine from the P protein to the T protein. This is Glycine cleavage system H protein from Synechococcus sp. (strain RCC307).